The primary structure comprises 89 residues: Double-stranded DNA-binding protein (89 aa).

In terms of assembly, homodimer.

May play a role in transcription of several T4 genes. Binds double-stranded DNA and interacts preferentially with T4 late promoter regions. This is Double-stranded DNA-binding protein (dsbA) from Enterobacteria phage T4 (Bacteriophage T4).